Here is a 161-residue protein sequence, read N- to C-terminus: Bifurcating [FeFe] hydrogenase gamma subunit (161 aa).

Cys78, Cys83, Cys119, and Cys123 together coordinate [2Fe-2S] cluster.

This sequence belongs to the complex I 24 kDa subunit family. As to quaternary structure, heterotrimer composed of HydA (alpha subunit), HydB (beta subunit) and HydC (gamma subunit). Near neutral and acidic pH conditions favor oligomerization of the heterotrimeric holoenzyme. It depends on [2Fe-2S] cluster as a cofactor.

Its subcellular location is the cytoplasm. The catalysed reaction is 2 H2 + 2 oxidized [2Fe-2S]-[ferredoxin] + NAD(+) = 2 reduced [2Fe-2S]-[ferredoxin] + NADH + 3 H(+). Its function is as follows. Catalyzes the oxidation of the physiological electron carriers NADH and reduced ferredoxin, coupled to the production of H(2). Acts as a bifurcating [FeFe] hydrogenase, which uses the exergonic oxidation of reduced ferredoxin to drive the unfavorable oxidation of NADH to produce H(2). The gamma subunit might be the site where reduced ferredoxin is oxidized. The sequence is that of Bifurcating [FeFe] hydrogenase gamma subunit from Thermotoga maritima (strain ATCC 43589 / DSM 3109 / JCM 10099 / NBRC 100826 / MSB8).